The primary structure comprises 317 residues: CXXC-type zinc finger protein 5 (317 aa).

Over residues 1-49 (MSSLSSGPQDTGGSSSSSSNGSSGSGPKAGVADKSAAVAAAAPASVADD) the composition is skewed to low complexity. A disordered region spans residues 1 to 96 (MSSLSSGPQD…GSGGGSMMGG (96 aa)). Residues 83-94 (GGSGGSGGGSMM) are compositionally biased toward gly residues. The CXXC-type zinc finger occupies 251 to 292 (GKKKRKRCGMCAPCRRRINCEQCSSCRNRKTGHQICKFRKCE). The Nuclear localization signal signature appears at 252–257 (KKKRKR). C258, C261, C264, C270, C273, C276, C286, and C291 together coordinate Zn(2+).

As to quaternary structure, interacts with DVL1. Interacts with RBPJ.

Its subcellular location is the nucleus. It is found in the cytoplasm. May indirectly participate in activation of the NF-kappa-B and MAPK pathways. Acts as a mediator of BMP4-mediated modulation of canonical Wnt signaling activity in neural stem cells. Required for DNA damage-induced ATM phosphorylation, p53 activation and cell cycle arrest. Involved in myelopoiesis. Binds to the oxygen responsive element of COX4I2 and represses its transcription under hypoxia conditions (4% oxygen), as well as normoxia conditions (20% oxygen). May repress COX4I2 transactivation induced by CHCHD2 and RBPJ. Binds preferentially to DNA containing cytidine-phosphate-guanosine (CpG) dinucleotides over CpH (H=A, T, and C), hemimethylated-CpG and hemimethylated-hydroxymethyl-CpG. The polypeptide is CXXC-type zinc finger protein 5 (CXXC5) (Bos taurus (Bovine)).